Consider the following 128-residue polypeptide: Histone H2A type 1-J (128 aa).

Positions 1 to 22 (MSGRGKQGGKARAKAKTRSSRA) are disordered. Position 2 is an N-acetylserine (serine 2). At serine 2 the chain carries Phosphoserine; by RPS6KA5. A Citrulline; alternate modification is found at arginine 4. Arginine 4 is modified (symmetric dimethylarginine; by PRMT5; alternate). The residue at position 6 (lysine 6) is an N6-(2-hydroxyisobutyryl)lysine. Positions 7 to 19 (QGGKARAKAKTRS) are enriched in basic residues. The residue at position 10 (lysine 10) is an N6-(2-hydroxyisobutyryl)lysine; alternate. 2 positions are modified to N6-(beta-hydroxybutyryl)lysine; alternate: lysine 10 and lysine 14. Lysine 10 is modified (N6-lactoyllysine; alternate). Lysine 10 is modified (N6-succinyllysine; alternate). Residue lysine 14 forms a Glycyl lysine isopeptide (Lys-Gly) (interchain with G-Cter in ubiquitin); alternate linkage. Residue lysine 16 forms a Glycyl lysine isopeptide (Lys-Gly) (interchain with G-Cter in ubiquitin) linkage. Lysine 37 bears the N6-(2-hydroxyisobutyryl)lysine; alternate mark. Lysine 37 carries the post-translational modification N6-(beta-hydroxybutyryl)lysine; alternate. Position 37 is an N6-crotonyllysine; alternate (lysine 37). Lysine 75 and lysine 76 each carry N6-(2-hydroxyisobutyryl)lysine. Lysine 96 is subject to N6-(2-hydroxyisobutyryl)lysine; alternate. The residue at position 96 (lysine 96) is an N6-(beta-hydroxybutyryl)lysine; alternate. N6-succinyllysine; alternate is present on lysine 96. N6-glutaryllysine; alternate is present on lysine 96. Lysine 100 carries the post-translational modification N6-glutaryllysine. Glutamine 105 bears the N5-methylglutamine mark. Lysine 119 carries the N6-(2-hydroxyisobutyryl)lysine; alternate modification. Lysine 119 is subject to N6-(beta-hydroxybutyryl)lysine; alternate. N6-crotonyllysine; alternate is present on residues lysine 119 and lysine 120. 2 positions are modified to N6-glutaryllysine; alternate: lysine 119 and lysine 120. Lysine 120 is covalently cross-linked (Glycyl lysine isopeptide (Lys-Gly) (interchain with G-Cter in ubiquitin); alternate). Position 121 is a phosphothreonine; by DCAF1 (threonine 121). An N6-crotonyllysine; alternate modification is found at lysine 126. The residue at position 126 (lysine 126) is an N6-glutaryllysine; alternate.

The protein belongs to the histone H2A family. As to quaternary structure, the nucleosome is a histone octamer containing two molecules each of H2A, H2B, H3 and H4 assembled in one H3-H4 heterotetramer and two H2A-H2B heterodimers. The octamer wraps approximately 147 bp of DNA. In terms of processing, deiminated on Arg-4 in granulocytes upon calcium entry. Monoubiquitination of Lys-120 (H2AK119Ub) by RING1, TRIM37 and RNF2/RING2 complex gives a specific tag for epigenetic transcriptional repression and participates in X chromosome inactivation of female mammals. It is involved in the initiation of both imprinted and random X inactivation. Ubiquitinated H2A is enriched in inactive X chromosome chromatin. Ubiquitination of H2A functions downstream of methylation of 'Lys-27' of histone H3 (H3K27me). H2AK119Ub by RNF2/RING2 can also be induced by ultraviolet and may be involved in DNA repair. Monoubiquitination of Lys-120 (H2AK119Ub) by TRIM37 may promote transformation of cells in a number of breast cancers. Following DNA double-strand breaks (DSBs), it is ubiquitinated through 'Lys-63' linkage of ubiquitin moieties by the E2 ligase UBE2N and the E3 ligases RNF8 and RNF168, leading to the recruitment of repair proteins to sites of DNA damage. Ubiquitination at Lys-14 and Lys-16 (H2AK13Ub and H2AK15Ub, respectively) in response to DNA damage is initiated by RNF168 that mediates monoubiquitination at these 2 sites, and 'Lys-63'-linked ubiquitin are then conjugated to monoubiquitin; RNF8 is able to extend 'Lys-63'-linked ubiquitin chains in vitro. Deubiquitinated by USP51 at Lys-14 and Lys-16 (H2AK13Ub and H2AK15Ub, respectively) after damaged DNA is repaired. H2AK119Ub and ionizing radiation-induced 'Lys-63'-linked ubiquitination (H2AK13Ub and H2AK15Ub) are distinct events. Post-translationally, phosphorylation on Ser-2 (H2AS1ph) is enhanced during mitosis. Phosphorylation on Ser-2 by RPS6KA5/MSK1 directly represses transcription. Acetylation of H3 inhibits Ser-2 phosphorylation by RPS6KA5/MSK1. Phosphorylation at Thr-121 (H2AT120ph) by DCAF1 is present in the regulatory region of many tumor suppresor genes and down-regulates their transcription. In terms of processing, glutamine methylation at Gln-105 (H2AQ104me) by FBL is specifically dedicated to polymerase I. It is present at 35S ribosomal DNA locus and impairs binding of the FACT complex. Symmetric dimethylation on Arg-4 by the PRDM1/PRMT5 complex may play a crucial role in the germ-cell lineage. Post-translationally, crotonylation (Kcr) is specifically present in male germ cells and marks testis-specific genes in post-meiotic cells, including X-linked genes that escape sex chromosome inactivation in haploid cells. Crotonylation marks active promoters and enhancers and confers resistance to transcriptional repressors. It is also associated with post-meiotically activated genes on autosomes. In terms of processing, lactylated in macrophages by EP300/P300 by using lactoyl-CoA directly derived from endogenous or exogenous lactate, leading to stimulates gene transcription.

The protein resides in the nucleus. Its subcellular location is the chromosome. Functionally, core component of nucleosome. Nucleosomes wrap and compact DNA into chromatin, limiting DNA accessibility to the cellular machineries which require DNA as a template. Histones thereby play a central role in transcription regulation, DNA repair, DNA replication and chromosomal stability. DNA accessibility is regulated via a complex set of post-translational modifications of histones, also called histone code, and nucleosome remodeling. This chain is Histone H2A type 1-J, found in Homo sapiens (Human).